The following is a 145-amino-acid chain: 3-dehydroquinate dehydratase (145 aa).

Tyr-22 (proton acceptor) is an active-site residue. Substrate contacts are provided by Asn-71, His-77, and Asp-84. His-97 (proton donor) is an active-site residue. Substrate-binding positions include Leu-98 to Ser-99 and Arg-108.

The protein belongs to the type-II 3-dehydroquinase family. In terms of assembly, homododecamer.

It carries out the reaction 3-dehydroquinate = 3-dehydroshikimate + H2O. The protein operates within metabolic intermediate biosynthesis; chorismate biosynthesis; chorismate from D-erythrose 4-phosphate and phosphoenolpyruvate: step 3/7. Its function is as follows. Catalyzes a trans-dehydration via an enolate intermediate. The polypeptide is 3-dehydroquinate dehydratase (Francisella philomiragia subsp. philomiragia (strain ATCC 25017 / CCUG 19701 / FSC 153 / O#319-036)).